The following is a 299-amino-acid chain: ATP synthase gamma chain (299 aa).

Belongs to the ATPase gamma chain family. F-type ATPases have 2 components, CF(1) - the catalytic core - and CF(0) - the membrane proton channel. CF(1) has five subunits: alpha(3), beta(3), gamma(1), delta(1), epsilon(1). CF(0) has three main subunits: a, b and c.

It is found in the cell inner membrane. Its function is as follows. Produces ATP from ADP in the presence of a proton gradient across the membrane. The gamma chain is believed to be important in regulating ATPase activity and the flow of protons through the CF(0) complex. In Rhodospirillum rubrum, this protein is ATP synthase gamma chain.